Consider the following 366-residue polypeptide: tRNA(Met) cytidine acetate ligase (366 aa).

Residues 7-20, Gly101, Asn145, and Arg170 contribute to the ATP site; that span reads IAEF…HQYL.

This sequence belongs to the TmcAL family.

It is found in the cytoplasm. It carries out the reaction cytidine(34) in elongator tRNA(Met) + acetate + ATP = N(4)-acetylcytidine(34) in elongator tRNA(Met) + AMP + diphosphate. Its function is as follows. Catalyzes the formation of N(4)-acetylcytidine (ac(4)C) at the wobble position of elongator tRNA(Met), using acetate and ATP as substrates. First activates an acetate ion to form acetyladenylate (Ac-AMP) and then transfers the acetyl group to tRNA to form ac(4)C34. This chain is tRNA(Met) cytidine acetate ligase, found in Pediococcus pentosaceus (strain ATCC 25745 / CCUG 21536 / LMG 10740 / 183-1w).